Here is a 145-residue protein sequence, read N- to C-terminus: MGFSETQEELVLRSWQSMKKDSESIALKFFLRIFEIAPAAKQMFSFLRDSGDDVPLESHPKACESATQLRKTGDVKVREATLRRLGATHVKAGVADAHFEVVKTALLDTIKDAVPEMWSPEMKGAWEEAYDQLAAAIKEEMKKAA.

Residues 2–142 enclose the Globin domain; sequence GFSETQEELV…LAAAIKEEMK (141 aa). The Homodimerization signature appears at 35–39; the sequence is EIAPA. Residues serine 45, histidine 59, lysine 61, arginine 84, threonine 88, and histidine 89 each contribute to the heme b site. A Homodimerization motif is present at residues 96–108; that stretch reads DAHFEVVKTALLD.

The protein belongs to the plant globin family. In terms of assembly, homodimer. Heme b serves as cofactor. Expressed in embryonic (embryos, coleoptiles and seminal roots) and vegetative (leaves and roots) organs.

It is found in the cytoplasm. The protein localises to the nucleus. It carries out the reaction Fe(III)-heme b-[protein] + nitric oxide + H2O = Fe(II)-heme b-[protein] + nitrite + 2 H(+). Phytoglobin that reduces nitrite to nitric oxide under anoxic conditions (e.g. during flooding or in waterlogged soil). May not function as an oxygen storage or transport protein. Has an unusually high affinity for O(2) through an hexacoordinate heme iron because of a very low dissociation constant. This Oryza sativa subsp. indica (Rice) protein is Anaerobic nitrite reductase NSHB5.